The primary structure comprises 188 residues: Ribosome-recycling factor (188 aa).

It belongs to the RRF family.

The protein localises to the cytoplasm. Its function is as follows. Responsible for the release of ribosomes from messenger RNA at the termination of protein biosynthesis. May increase the efficiency of translation by recycling ribosomes from one round of translation to another. The chain is Ribosome-recycling factor from Bradyrhizobium diazoefficiens (strain JCM 10833 / BCRC 13528 / IAM 13628 / NBRC 14792 / USDA 110).